A 330-amino-acid chain; its full sequence is MALPVYYDKDIDLGVIQSLQVGIIGYGAQGEAQALNLRDSKVKVRIGLYQGSLSVPKAKAEGFEVLEVKELVQQSDLIMALLPDELHKEVLEKEVIPFLKEGQIVGFAHGFSVHFNQVVLPKGVGAILVAPKGPGSALREEYLKNRGLYHLIAIEQESSKNNAKAVALSYAKAMGGGRMGVLETSFKEECESDLFGEQAVLCGGLEAIIRMGFETLIKAGYPEELAYFECVHEVKLVADLLHYKGVEGLRKHISNTAEFGAIKNREPMGNLLEKRMQKILKKIQNGSFAKDFLLEKSLNYPRLNTERKALKETKIEQIGEILRAPFNHKK.

The 182-residue stretch at 3–184 folds into the KARI N-terminal Rossmann domain; the sequence is LPVYYDKDID…GGGRMGVLET (182 aa). Residues 26–29, Ser-52, and Ser-54 contribute to the NADP(+) site; that span reads YGAQ. His-109 is an active-site residue. Gly-135 lines the NADP(+) pocket. The KARI C-terminal knotted domain maps to 185-329; that stretch reads SFKEECESDL…EILRAPFNHK (145 aa). Asp-193, Glu-197, Glu-229, and Glu-233 together coordinate Mg(2+). Substrate is bound at residue Ser-254.

Belongs to the ketol-acid reductoisomerase family. Requires Mg(2+) as cofactor.

The catalysed reaction is (2R)-2,3-dihydroxy-3-methylbutanoate + NADP(+) = (2S)-2-acetolactate + NADPH + H(+). It catalyses the reaction (2R,3R)-2,3-dihydroxy-3-methylpentanoate + NADP(+) = (S)-2-ethyl-2-hydroxy-3-oxobutanoate + NADPH + H(+). It functions in the pathway amino-acid biosynthesis; L-isoleucine biosynthesis; L-isoleucine from 2-oxobutanoate: step 2/4. Its pathway is amino-acid biosynthesis; L-valine biosynthesis; L-valine from pyruvate: step 2/4. In terms of biological role, involved in the biosynthesis of branched-chain amino acids (BCAA). Catalyzes an alkyl-migration followed by a ketol-acid reduction of (S)-2-acetolactate (S2AL) to yield (R)-2,3-dihydroxy-isovalerate. In the isomerase reaction, S2AL is rearranged via a Mg-dependent methyl migration to produce 3-hydroxy-3-methyl-2-ketobutyrate (HMKB). In the reductase reaction, this 2-ketoacid undergoes a metal-dependent reduction by NADPH to yield (R)-2,3-dihydroxy-isovalerate. This is Ketol-acid reductoisomerase (NADP(+)) from Helicobacter pylori (strain Shi470).